Consider the following 470-residue polypeptide: Putative ankyrin repeat protein L279 (470 aa).

ANK repeat units lie at residues 119-148 (RDDY…NPGT), 149-178 (NKYA…GSDK), 372-401 (ETQG…NVNE), and 403-431 (NGKP…DISL).

The sequence is that of Putative ankyrin repeat protein L279 from Acanthamoeba polyphaga (Amoeba).